Consider the following 318-residue polypeptide: MIKKRNTTKISVIGAGSVGATTAYALMLSGVATEIVLVDVNKSKTEGEAMDLSHGADFVKPVNILSGDYKDTESSDIVVITAGAAQKVGETRLQLINKNINIFKSIIPEVVKYNKDAILLVVSNPVDVLSYVTYKLSGFPKERVIGSGTVLDTSRLKHEIGKRYKIDPRNVNTYIMGEHGDSEIATWSVTNIQNIKIDEYANKENLEYNDNFRKEVYENVKNAAYEVINRKGATFYAIALAVTRIVKAILGDEKTILPVSTLVENYYGIKDVYLGMPCIVGGSGIEKALSIDLNKTEASKLVKSAETLKNTLNNASGL.

NAD(+) contacts are provided by residues Val18, Asp39, Lys44, Tyr69, and 83-84; that span reads GA. The substrate site is built by Gln86 and Arg92. NAD(+)-binding positions include Ser105, 122-124, and Ser147; that span reads VSN. 124–127 is a substrate binding site; the sequence is NPVD. 152-155 contacts substrate; sequence DTSR. Catalysis depends on His179, which acts as the Proton acceptor. A Phosphotyrosine modification is found at Tyr225. A substrate-binding site is contributed by Thr234.

This sequence belongs to the LDH/MDH superfamily. LDH family. Homotetramer.

The protein localises to the cytoplasm. It carries out the reaction (S)-lactate + NAD(+) = pyruvate + NADH + H(+). The protein operates within fermentation; pyruvate fermentation to lactate; (S)-lactate from pyruvate: step 1/1. In terms of biological role, catalyzes the conversion of lactate to pyruvate. The sequence is that of L-lactate dehydrogenase from Clostridium botulinum (strain Loch Maree / Type A3).